The chain runs to 384 residues: Guanine nucleotide-binding protein alpha-1 subunit (384 aa).

The tract at residues 1–22 (MGSLCSRNKHYSQADDEENTQT) is disordered. The N-myristoyl glycine moiety is linked to residue G2. C5 carries the S-palmitoyl cysteine lipid modification. Positions 38-384 (HIQKLLLLGA…RRNLFEAGLL (347 aa)) constitute a G-alpha domain. The segment at 41-54 (KLLLLGAGDSGKST) is G1 motif. Residues D49, S50, G51, K52, S53, T54, D163, L188, T194, G222, N288, K289, D291, and A356 each contribute to the GTP site. S53 is a Mg(2+) binding site. The interval 186 to 194 (DVLFARIRT) is G2 motif. T194 is a Mg(2+) binding site. The segment at 215-224 (YRLFDVGGQR) is G3 motif. Residues 284 to 291 (MLFLNKFD) form a G4 motif region. Residues 354–359 (TTALDQ) form a G5 motif region.

This sequence belongs to the G-alpha family. G proteins are composed of 3 units; alpha, beta and gamma. The alpha chain contains the guanine nucleotide binding site. Mg(2+) serves as cofactor.

Functionally, guanine nucleotide-binding proteins (G proteins) are involved as modulators or transducers in various transmembrane signaling systems. The protein is Guanine nucleotide-binding protein alpha-1 subunit (GPA1) of Solanum lycopersicum (Tomato).